Reading from the N-terminus, the 339-residue chain is Serpentine receptor class r-10 (339 aa).

Over 1–11 (MSGELWITLVD) the chain is Extracellular. A helical membrane pass occupies residues 12-32 (TADIVGVTLTFCVNIVLLGLL). Over 33–42 (KTRGKNLGTY) the chain is Cytoplasmic. The chain crosses the membrane as a helical span at residues 43–63 (KYLMAFFSVFSIFYAIIEFIL). The Extracellular portion of the chain corresponds to 64 to 92 (RPIMHIENTTFFLISRKRFNYSTKLGKIN). N-linked (GlcNAc...) asparagine glycosylation is found at N71 and N83. A helical transmembrane segment spans residues 93–113 (SAFYCACFATSFVVSGVHFVY). At 114 to 131 (RYFATCKPNLLRLFNLPT) the chain is on the cytoplasmic side. A helical membrane pass occupies residues 132 to 152 (LLLWPLGCSVPVTMWASVSYF). The Extracellular segment spans residues 153–201 (LYPDTEYTEAAVTNVLNNHYNWIKKENVSYIAYVYYQYENGVRHIYLKN). N-linked (GlcNAc...) asparagine glycosylation is present at N179. The chain crosses the membrane as a helical span at residues 202-222 (LLGCFVHYFVMSMTFVVMFYC). Residues 223–254 (GYATWKTMNEHKDVSDRTRALQKQLFKALVLQ) lie on the Cytoplasmic side of the membrane. A helical transmembrane segment spans residues 255–275 (TLIPTIFMYAPTGVMFIAPFF). Topologically, residues 276–284 (DVNLNANAN) are extracellular. Residues 285–305 (FIVFCSFLYPGLDPLILILII) traverse the membrane as a helical segment. Residues 306–339 (RDFRRTIFNFLCGKKNSVDESRSTTRANLSQVPT) lie on the Cytoplasmic side of the membrane.

This sequence belongs to the nematode receptor-like protein str family. In terms of assembly, interacts with odr-4. As to expression, strongly expressed in the sensory cilia of AWA olfactory neurons, and at low levels in the CEP neurons.

Its subcellular location is the cell projection. The protein localises to the cilium membrane. In terms of biological role, an odorant receptor which affects chemotaxis to the volatile odorant diacetyl. Specifies AWA neuronal cell fate via the odr-7 pathway. In Caenorhabditis elegans, this protein is Serpentine receptor class r-10.